Here is a 257-residue protein sequence, read N- to C-terminus: 3-deoxy-manno-octulosonate cytidylyltransferase (257 aa).

Belongs to the KdsB family.

It is found in the cytoplasm. It carries out the reaction 3-deoxy-alpha-D-manno-oct-2-ulosonate + CTP = CMP-3-deoxy-beta-D-manno-octulosonate + diphosphate. It participates in nucleotide-sugar biosynthesis; CMP-3-deoxy-D-manno-octulosonate biosynthesis; CMP-3-deoxy-D-manno-octulosonate from 3-deoxy-D-manno-octulosonate and CTP: step 1/1. It functions in the pathway bacterial outer membrane biogenesis; lipopolysaccharide biosynthesis. Its function is as follows. Activates KDO (a required 8-carbon sugar) for incorporation into bacterial lipopolysaccharide in Gram-negative bacteria. This is 3-deoxy-manno-octulosonate cytidylyltransferase from Methylobacillus flagellatus (strain ATCC 51484 / DSM 6875 / VKM B-1610 / KT).